The primary structure comprises 500 residues: MSAQPAHLCFRSFVEALKVDNDLVEINTPIDPNLEAAAITRRVCETNDKAPLFNNLIGMKNGLFRILGAPGSLRKSSADRYGRLARHLALPPTASMREILDKMLSASDMPPIPPTIVPTGPCKENSLDDSEFDLTELPVPLIHKSDGGKYIQTYGMHIVQSPDGTWTNWSIARAMVHDKNHLTGLVIPPQHIWQIHQMWKKEGRSDVPWALAFGVPPAAIMASSMPIPDGVTEAGYVGAMTGSSLELVKCDTNDLYVPATSEIVLEGTLSISETGPEGPFGEMHGYIFPGDTHLGAKYKVNRITYRNNAIMPMSSCGRLTDETHTMIGSLAAAEIRKLCQQNDLPITDAFAPFESQVTWVALRVDTEKLRAMKTTSEGFRKRVGDVVFNHKAGYTIHRLVLVGDDIDVYEGKDVLWAFSTRCRPGMDETLFEDVRGFPLIPYMGHGNGPAHRGGKVVSDALMPTEYTTGRNWEAADFNQSYPEDLKQKVLDNWTKMGFSN.

3 residues coordinate Mn(2+): Asn168, His191, and Glu233. Residues 168–173, 190–191, and Glu233 contribute to the prenylated FMN site; these read NWSIAR and QH. The active-site Proton donor is the Glu282. Position 391 (Lys391) interacts with prenylated FMN.

It belongs to the UbiD family. UbiD-like/FDC subfamily. In terms of assembly, homodimer. May form higher order oligomers. Mn(2+) is required as a cofactor. It depends on prenylated FMN as a cofactor.

The protein resides in the cytoplasm. The catalysed reaction is (E)-4-coumarate + H(+) = 4-vinylphenol + CO2. The enzyme catalyses (E)-cinnamate + H(+) = styrene + CO2. It catalyses the reaction (E)-ferulate + H(+) = 2-methoxy-4-vinylphenol + CO2. In terms of biological role, catalyzes the reversible decarboxylation of aromatic carboxylic acids like ferulic acid, p-coumaric acid or cinnamic acid, producing the corresponding vinyl derivatives 4-vinylphenol, 4-vinylguaiacol, and styrene, respectively, which play the role of aroma metabolites. In Aspergillus niger (strain ATCC MYA-4892 / CBS 513.88 / FGSC A1513), this protein is Ferulic acid decarboxylase 1.